The sequence spans 356 residues: DNA polymerase IV (356 aa).

The UmuC domain maps to 7–188 (IIHIDMDCFY…LPLKKIPRVG (182 aa)). Residues Asp11 and Asp106 each contribute to the Mg(2+) site. Residue Glu107 is part of the active site.

Belongs to the DNA polymerase type-Y family. In terms of assembly, monomer. Mg(2+) serves as cofactor.

It is found in the cytoplasm. It carries out the reaction DNA(n) + a 2'-deoxyribonucleoside 5'-triphosphate = DNA(n+1) + diphosphate. Its function is as follows. Poorly processive, error-prone DNA polymerase involved in untargeted mutagenesis. Copies undamaged DNA at stalled replication forks, which arise in vivo from mismatched or misaligned primer ends. These misaligned primers can be extended by PolIV. Exhibits no 3'-5' exonuclease (proofreading) activity. May be involved in translesional synthesis, in conjunction with the beta clamp from PolIII. The sequence is that of DNA polymerase IV from Actinobacillus pleuropneumoniae serotype 5b (strain L20).